Here is a 181-residue protein sequence, read N- to C-terminus: Shikimate kinase (181 aa).

An ATP-binding site is contributed by 11 to 16 (GAGKSK). Ser-15 serves as a coordination point for Mg(2+). Substrate-binding residues include Asp-33, Arg-58, and Gly-80. Arg-128 serves as a coordination point for ATP. Substrate is bound at residue Arg-144.

It belongs to the shikimate kinase family. In terms of assembly, monomer. Requires Mg(2+) as cofactor.

Its subcellular location is the cytoplasm. The catalysed reaction is shikimate + ATP = 3-phosphoshikimate + ADP + H(+). Its pathway is metabolic intermediate biosynthesis; chorismate biosynthesis; chorismate from D-erythrose 4-phosphate and phosphoenolpyruvate: step 5/7. Its function is as follows. Catalyzes the specific phosphorylation of the 3-hydroxyl group of shikimic acid using ATP as a cosubstrate. The sequence is that of Shikimate kinase from Leptospira biflexa serovar Patoc (strain Patoc 1 / Ames).